The chain runs to 529 residues: BAR/IMD domain-containing adapter protein 2-like 2 (529 aa).

Residues 1–239 (MAPEMDQFYR…HSPGLLGPAL (239 aa)) form the IMD domain. 2 disordered regions span residues 221 to 327 (EASR…GGAR) and 403 to 510 (TSMS…TNPF). Serine 231, serine 272, and serine 302 each carry phosphoserine. Over residues 299–313 (SASSLYSGSAQSSRS) the composition is skewed to low complexity. The 64-residue stretch at 324-387 (GGARRVRALV…PEAYVKALEE (64 aa)) folds into the SH3 domain. Composition is skewed to low complexity over residues 403–413 (TSMSPMTPMNP) and 452–462 (RSRTPSRVPSR). The span at 463 to 472 (APSPAPPPLP) shows a compositional bias: pro residues. 2 positions are modified to phosphoserine: serine 478 and serine 481.

Expressed in the epithelial layer of the intestine (at protein level).

Its subcellular location is the cell membrane. The protein localises to the cell junction. The protein resides in the cytoplasmic vesicle membrane. Phosphoinositides-binding protein that induces the formation of planar or gently curved membrane structures. Binds to phosphoinositides, including to phosphatidylinositol 4,5-bisphosphate (PtdIns(4,5)P2) headgroups. There seems to be no clear preference for a specific phosphoinositide. In Homo sapiens (Human), this protein is BAR/IMD domain-containing adapter protein 2-like 2 (BAIAP2L2).